The sequence spans 554 residues: Glucose-6-phosphate isomerase (554 aa).

The active-site Proton donor is glutamate 358. Catalysis depends on residues histidine 389 and lysine 515. Over residues 527–540 (ANNSPAPQSDSSTD) the composition is skewed to polar residues. Residues 527-554 (ANNSPAPQSDSSTDALVRRYRSERGRTS) are disordered. Positions 542–554 (LVRRYRSERGRTS) are enriched in basic and acidic residues.

Belongs to the GPI family.

It is found in the cytoplasm. The catalysed reaction is alpha-D-glucose 6-phosphate = beta-D-fructose 6-phosphate. It participates in carbohydrate biosynthesis; gluconeogenesis. It functions in the pathway carbohydrate degradation; glycolysis; D-glyceraldehyde 3-phosphate and glycerone phosphate from D-glucose: step 2/4. Functionally, catalyzes the reversible isomerization of glucose-6-phosphate to fructose-6-phosphate. This Mycolicibacterium paratuberculosis (strain ATCC BAA-968 / K-10) (Mycobacterium paratuberculosis) protein is Glucose-6-phosphate isomerase.